We begin with the raw amino-acid sequence, 884 residues long: Alanine--tRNA ligase (884 aa).

Zn(2+) contacts are provided by His562, His566, Cys676, and His680.

The protein belongs to the class-II aminoacyl-tRNA synthetase family. The cofactor is Zn(2+).

Its subcellular location is the cytoplasm. The enzyme catalyses tRNA(Ala) + L-alanine + ATP = L-alanyl-tRNA(Ala) + AMP + diphosphate. Catalyzes the attachment of alanine to tRNA(Ala) in a two-step reaction: alanine is first activated by ATP to form Ala-AMP and then transferred to the acceptor end of tRNA(Ala). Also edits incorrectly charged Ser-tRNA(Ala) and Gly-tRNA(Ala) via its editing domain. The polypeptide is Alanine--tRNA ligase (Jannaschia sp. (strain CCS1)).